Here is a 675-residue protein sequence, read N- to C-terminus: Metal-nicotianamine transporter YSL3 (675 aa).

14 helical membrane-spanning segments follow: residues 42-62 (ITFR…VIVM), 66-86 (LTTG…FVFL), 114-134 (CAVA…LLGL), 159-179 (GIGW…LALV), 219-239 (VFGF…QWFF), 280-300 (IVNI…WPLI), 325-345 (VFIS…KILF), 386-406 (IPLW…IIAI), 408-428 (IMFP…APSL), 450-470 (VALF…AGLV), 504-524 (VSQA…FFLF), 556-576 (FSAL…FAVA), 602-622 (FLVG…VFAW), and 630-650 (AGLM…LWIL).

It belongs to the YSL (TC 2.A.67.2) family. Expressed in leaves, anthers and pollen grains. Restricted to the vasculature.

It is found in the membrane. Functionally, may be involved in the lateral transport of nicotianamine-chelated metals in the vasculature. The protein is Metal-nicotianamine transporter YSL3 (YSL3) of Arabidopsis thaliana (Mouse-ear cress).